The chain runs to 455 residues: Glutamate-1-semialdehyde 2,1-aminomutase (455 aa).

N6-(pyridoxal phosphate)lysine is present on lysine 286.

The protein belongs to the class-III pyridoxal-phosphate-dependent aminotransferase family. HemL subfamily. In terms of assembly, homodimer. Pyridoxal 5'-phosphate serves as cofactor.

The protein resides in the cytoplasm. It carries out the reaction (S)-4-amino-5-oxopentanoate = 5-aminolevulinate. It functions in the pathway porphyrin-containing compound metabolism; protoporphyrin-IX biosynthesis; 5-aminolevulinate from L-glutamyl-tRNA(Glu): step 2/2. This chain is Glutamate-1-semialdehyde 2,1-aminomutase, found in Clavibacter sepedonicus (Clavibacter michiganensis subsp. sepedonicus).